The chain runs to 185 residues: Adenine phosphoribosyltransferase (185 aa).

The protein belongs to the purine/pyrimidine phosphoribosyltransferase family. As to quaternary structure, homodimer.

The protein resides in the cytoplasm. The enzyme catalyses AMP + diphosphate = 5-phospho-alpha-D-ribose 1-diphosphate + adenine. It participates in purine metabolism; AMP biosynthesis via salvage pathway; AMP from adenine: step 1/1. Its function is as follows. Catalyzes a salvage reaction resulting in the formation of AMP, that is energically less costly than de novo synthesis. In Pectobacterium carotovorum subsp. carotovorum (strain PC1), this protein is Adenine phosphoribosyltransferase.